Reading from the N-terminus, the 223-residue chain is Ribonuclease 3 (223 aa).

The region spanning 3–125 is the RNase III domain; that stretch reads LERLQKKLGY…IIAAVYLDAG (123 aa). Glutamate 38 lines the Mg(2+) pocket. The active site involves aspartate 42. 2 residues coordinate Mg(2+): aspartate 111 and glutamate 114. Residue glutamate 114 is part of the active site. A DRBM domain is found at 152–222; sequence DPKTRLQEYL…ALQVIKVLGI (71 aa).

This sequence belongs to the ribonuclease III family. In terms of assembly, homodimer. It depends on Mg(2+) as a cofactor.

Its subcellular location is the cytoplasm. The catalysed reaction is Endonucleolytic cleavage to 5'-phosphomonoester.. In terms of biological role, digests double-stranded RNA. Involved in the processing of primary rRNA transcript to yield the immediate precursors to the large and small rRNAs (23S and 16S). Processes some mRNAs, and tRNAs when they are encoded in the rRNA operon. Processes pre-crRNA and tracrRNA of type II CRISPR loci if present in the organism. This is Ribonuclease 3 from Glaesserella parasuis serovar 5 (strain SH0165) (Haemophilus parasuis).